Consider the following 459-residue polypeptide: Vasoactive intestinal polypeptide receptor 1 (459 aa).

The signal sequence occupies residues 1 to 30; it reads MRPPSLPPARWLCVLAGALACALGPAGSRA. Topologically, residues 31 to 142 are extracellular; sequence ASPHQECEYL…EQQQTEFYDA (112 aa). Cystine bridges form between Cys-37–Cys-209, Cys-50–Cys-72, Cys-63–Cys-105, Cys-86–Cys-122, and Cys-216–Cys-286. N-linked (GlcNAc...) asparagine glycans are attached at residues Asn-58, Asn-69, Asn-100, and Asn-104. The chain crosses the membrane as a helical span at residues 143–167; that stretch reads VKTGYTIGYSLSLASLLVAMAILSL. The Cytoplasmic segment spans residues 168-175; that stretch reads FRKLHCTR. Residues 176-197 form a helical membrane-spanning segment; sequence NYIHMHLFMSFILRATAVFIKD. Residues 198–217 are Extracellular-facing; it reads MALFNNGETDHCSEASVSCK. A helical membrane pass occupies residues 218–242; sequence AAVVFFQYCVMANFFWLLVEGLYLH. Residues 243-255 are Cytoplasmic-facing; sequence TLLAVSFFSERKY. A helical membrane pass occupies residues 256–277; sequence FWGYILIGWGVPSVFIMIWTIV. The Extracellular portion of the chain corresponds to 278–293; it reads RIHFEDFGCWDTIINS. An N-linked (GlcNAc...) asparagine glycan is attached at Asn-292. Residues 294-318 form a helical membrane-spanning segment; sequence SLWWIIKGPILISILVNFILFICII. Residues 319–340 lie on the Cytoplasmic side of the membrane; sequence RILVQKLRPPDIGKNDSSPYSR. Residues 341–361 traverse the membrane as a helical segment; that stretch reads LAKSTLLLIPLFGVHYVMFAF. The Extracellular portion of the chain corresponds to 362–369; it reads FPDNFKAQ. Residues 370–393 form a helical membrane-spanning segment; it reads VKMVFELVVGSFQGFVVAILYCFL. Residues 394–459 are Cytoplasmic-facing; that stretch reads NGEVQAELRR…SSFQAEVSLV (66 aa).

Belongs to the G-protein coupled receptor 2 family. Interacts with ADCYAP1/PACAP; activated by both PACAP27 and PACAP38 neuropeptides. Interacts with VIP; the interaction results in VIPR1 activation.

It is found in the cell membrane. In terms of biological role, g protein-coupled receptor activated by the neuropeptides vasoactive intestinal peptide (VIP) and pituitary adenylate cyclase-activating polypeptide (ADCYAP1/PACAP). Binds VIP and both PACAP27 and PACAP38 bioactive peptides with the following order of ligand affinity VIP = PACAP27 &gt; PACAP38. Ligand binding causes a conformation change that triggers signaling via guanine nucleotide-binding proteins (G proteins) and modulates the activity of downstream effectors. Activates cAMP-dependent pathway. In Mus musculus (Mouse), this protein is Vasoactive intestinal polypeptide receptor 1.